Reading from the N-terminus, the 491-residue chain is Probable glycogen synthase 2 (491 aa).

Lys15 is an ADP-alpha-D-glucose binding site.

This sequence belongs to the glycosyltransferase 1 family. Bacterial/plant glycogen synthase subfamily.

The enzyme catalyses [(1-&gt;4)-alpha-D-glucosyl](n) + ADP-alpha-D-glucose = [(1-&gt;4)-alpha-D-glucosyl](n+1) + ADP + H(+). It functions in the pathway glycan biosynthesis; glycogen biosynthesis. Its function is as follows. Synthesizes alpha-1,4-glucan chains using ADP-glucose. The polypeptide is Probable glycogen synthase 2 (glgA2) (Synechocystis sp. (strain ATCC 27184 / PCC 6803 / Kazusa)).